A 419-amino-acid chain; its full sequence is UDP-N-acetylglucosamine 1-carboxyvinyltransferase (419 aa).

Residue 22-23 coordinates phosphoenolpyruvate; sequence KN. R95 serves as a coordination point for UDP-N-acetyl-alpha-D-glucosamine. C119 acts as the Proton donor in catalysis. C119 carries the 2-(S-cysteinyl)pyruvic acid O-phosphothioketal modification. UDP-N-acetyl-alpha-D-glucosamine contacts are provided by residues 164 to 167, D308, and I330; that span reads KVSV.

This sequence belongs to the EPSP synthase family. MurA subfamily.

The protein resides in the cytoplasm. The enzyme catalyses phosphoenolpyruvate + UDP-N-acetyl-alpha-D-glucosamine = UDP-N-acetyl-3-O-(1-carboxyvinyl)-alpha-D-glucosamine + phosphate. Its pathway is cell wall biogenesis; peptidoglycan biosynthesis. Functionally, cell wall formation. Adds enolpyruvyl to UDP-N-acetylglucosamine. The sequence is that of UDP-N-acetylglucosamine 1-carboxyvinyltransferase from Rickettsia akari (strain Hartford).